A 435-amino-acid chain; its full sequence is Hyaluronidase-1 (435 aa).

Positions methionine 1 to glycine 21 are cleaved as a signal peptide. Disulfide bonds link cysteine 43–cysteine 333 and cysteine 207–cysteine 221. A glycan (N-linked (GlcNAc...) asparagine) is linked at asparagine 99. Glutamate 131 serves as the catalytic Proton donor. 2 N-linked (GlcNAc...) asparagine glycosylation sites follow: asparagine 216 and asparagine 350. An EGF-like domain is found at glycine 354 to glutamate 430. 3 disulfide bridges follow: cysteine 358–cysteine 369, cysteine 363–cysteine 418, and cysteine 420–cysteine 429.

It belongs to the glycosyl hydrolase 56 family. Highly expressed in the liver, kidney and heart. Weakly expressed in lung, placenta and skeletal muscle. No expression detected in adult brain. Isoform 1 is expressed only in bladder and prostate cancer cells, G2/G3 bladder tumor tissues and lymph node specimens showing tumor invasive tumors cells. Isoform 3, isoform 4, isoform 5 and isoform 6 are expressed in normal bladder and bladder tumor tissues.

It localises to the secreted. It is found in the lysosome. The enzyme catalyses Random hydrolysis of (1-&gt;4)-linkages between N-acetyl-beta-D-glucosamine and D-glucuronate residues in hyaluronate.. In terms of biological role, may have a role in promoting tumor progression. May block the TGFB1-enhanced cell growth. The protein is Hyaluronidase-1 (HYAL1) of Homo sapiens (Human).